The primary structure comprises 487 residues: GTPase Der (487 aa).

EngA-type G domains are found at residues 3–166 and 199–372; these read PVVA…AEAM and IKLA…DSAT. GTP is bound by residues 9–16, 56–60, 118–121, 205–212, 252–256, and 317–320; these read GRPNVGKS, DTGGI, NKID, GKPNVGKS, DTAGV, and NKWD. Residues 373-457 form the KH-like domain; sequence RRVSTSMLTR…PIQLRFQEGD (85 aa).

It belongs to the TRAFAC class TrmE-Era-EngA-EngB-Septin-like GTPase superfamily. EngA (Der) GTPase family. As to quaternary structure, associates with the 50S ribosomal subunit.

Its function is as follows. GTPase that plays an essential role in the late steps of ribosome biogenesis. The sequence is that of GTPase Der from Shewanella oneidensis (strain ATCC 700550 / JCM 31522 / CIP 106686 / LMG 19005 / NCIMB 14063 / MR-1).